Here is a 401-residue protein sequence, read N- to C-terminus: LysM domain-containing GPI-anchored protein LYP4 (401 aa).

The N-terminal stretch at Met1 to Ser23 is a signal peptide. 4 disulfide bridges follow: Cys30–Cys96, Cys36–Cys162, Cys94–Cys160, and Cys96–Cys162. LysM domains are found at residues Val106–Val156 and Leu175–Val218. Intrachain disulfides connect Cys223-Cys255 and Cys250-Cys279. Residue Asn240 is glycosylated (N-linked (GlcNAc...) asparagine). N-linked (GlcNAc...) asparagine glycans are attached at residues Asn281, Asn288, and Asn310. Ser373 carries the GPI-anchor amidated serine lipid modification. Residues Ser374–Trp401 constitute a propeptide, removed in mature form.

In terms of assembly, interacts with LYP6. Interacts with CEBIP. Interacts with CERK1. Expressed in roots and leaves.

The protein localises to the cell membrane. Its function is as follows. Functions in innate immunity. Functions as a pattern recognition receptor (PRR), sensing bacterial peptidoglycan (PGN) and fungal chitin at the cell surface. Involved in resistance against the bacterial pathogen Xanthomonas oryzae pv. oryzae (Xoo) and the fungal pathogen Magnaporthe oryzae. Binds PGN and fungal chitin in vitro. Involved in microbe-associated molecular patterns (MAMPs) perception and participates in the activation of defense genes against the bacterial pathogen Xanthomonas oryzae pv. oryzicola (Xoc) or the fungal pathogen Magnaporthe oryzae. The protein is LysM domain-containing GPI-anchored protein LYP4 of Oryza sativa subsp. japonica (Rice).